Reading from the N-terminus, the 322-residue chain is Beta-ketoacyl-[acyl-carrier-protein] synthase III (322 aa).

Active-site residues include Cys-112 and His-249. Positions 250-254 (QANQR) are ACP-binding. Asn-279 is a catalytic residue.

The protein belongs to the thiolase-like superfamily. FabH family. In terms of assembly, homodimer.

The protein localises to the cytoplasm. It catalyses the reaction malonyl-[ACP] + acetyl-CoA + H(+) = 3-oxobutanoyl-[ACP] + CO2 + CoA. Its pathway is lipid metabolism; fatty acid biosynthesis. In terms of biological role, catalyzes the condensation reaction of fatty acid synthesis by the addition to an acyl acceptor of two carbons from malonyl-ACP. Catalyzes the first condensation reaction which initiates fatty acid synthesis and may therefore play a role in governing the total rate of fatty acid production. Possesses both acetoacetyl-ACP synthase and acetyl transacylase activities. Its substrate specificity determines the biosynthesis of branched-chain and/or straight-chain of fatty acids. The polypeptide is Beta-ketoacyl-[acyl-carrier-protein] synthase III (Caulobacter vibrioides (strain ATCC 19089 / CIP 103742 / CB 15) (Caulobacter crescentus)).